A 312-amino-acid polypeptide reads, in one-letter code: GATA transcription factor 6 (312 aa).

Disordered regions lie at residues 1-33 (MESV…VDDL), 56-77 (QRKR…STAD), and 136-186 (KSQH…PLWL). A compositionally biased stretch (basic and acidic residues) spans 56 to 71 (QRKRGVSDENTLHRSN). The segment covering 142–151 (VKTRPKRART) has biased composition (basic residues). The Nuclear localization signal motif lies at 143-150 (KTRPKRAR). The span at 157–186 (SHGSQSLTDSSSSSTTSSSSSPRPSSPLWL) shows a compositional bias: low complexity. Residues 217-271 (QTQTRQCGHCGVQKTPQWRAGPLGAKTLCNACGVRYKSGRLLPEYRPACSPTFSS) form a GATA-type zinc finger.

It belongs to the type IV zinc-finger family. Class A subfamily.

The protein localises to the nucleus. Transcriptional activator that specifically binds 5'-GATA-3' or 5'-GAT-3' motifs within gene promoters. May be involved in the regulation of some light-responsive genes. The chain is GATA transcription factor 6 (GATA6) from Arabidopsis thaliana (Mouse-ear cress).